The primary structure comprises 216 residues: Ras-related protein RABA1b (216 aa).

20 to 27 (GDSGVGKS) is a binding site for GTP. Positions 42–50 (SKSTIGVEF) match the Effector region motif. Residues 68–72 (DTAGQ), 126–129 (NKSD), and 156–157 (SA) contribute to the GTP site. 2 S-geranylgeranyl cysteine lipidation sites follow: cysteine 213 and cysteine 214.

This sequence belongs to the small GTPase superfamily. Rab family.

Its subcellular location is the cell membrane. Its function is as follows. Intracellular vesicle trafficking and protein transport. In Arabidopsis thaliana (Mouse-ear cress), this protein is Ras-related protein RABA1b (RABA1B).